Reading from the N-terminus, the 325-residue chain is Beta-ketoacyl-[acyl-carrier-protein] synthase III 2 (325 aa).

Residues Cys-113 and His-250 contribute to the active site. An ACP-binding region spans residues 251 to 255 (SANLR). Asn-280 is an active-site residue.

The protein belongs to the thiolase-like superfamily. FabH family. As to quaternary structure, homodimer.

It localises to the cytoplasm. It catalyses the reaction 3-methylbutanoyl-CoA + malonyl-[ACP] + H(+) = 5-methyl-3-oxohexanoyl-[ACP] + CO2 + CoA. The enzyme catalyses 2-methylpropanoyl-CoA + malonyl-[ACP] + H(+) = 4-methyl-3-oxopentanoyl-[ACP] + CO2 + CoA. The catalysed reaction is (2S)-2-methylbutanoyl-CoA + malonyl-[ACP] + H(+) = (4S)-4-methyl-3-oxohexanoyl-[ACP] + CO2 + CoA. It carries out the reaction malonyl-[ACP] + acetyl-CoA + H(+) = 3-oxobutanoyl-[ACP] + CO2 + CoA. It catalyses the reaction malonyl-[ACP] + propanoyl-CoA + H(+) = 3-oxopentanoyl-[ACP] + CO2 + CoA. The enzyme catalyses butanoyl-CoA + malonyl-[ACP] + H(+) = 3-oxohexanoyl-[ACP] + CO2 + CoA. The catalysed reaction is pentanoyl-CoA + malonyl-[ACP] + H(+) = 3-oxoheptanoyl-[ACP] + CO2 + CoA. It carries out the reaction hexanoyl-CoA + malonyl-[ACP] + H(+) = 3-oxooctanoyl-[ACP] + CO2 + CoA. It catalyses the reaction heptanoyl-CoA + malonyl-[ACP] + H(+) = 3-oxononanoyl-[ACP] + CO2 + CoA. Its pathway is lipid metabolism; fatty acid biosynthesis. Its function is as follows. Catalyzes the condensation reaction of fatty acid synthesis by the addition to an acyl acceptor of two carbons from malonyl-ACP. Catalyzes the first condensation reaction which initiates fatty acid synthesis and may therefore play a role in governing the total rate of fatty acid production. Possesses both acetoacetyl-ACP synthase and acetyl transacylase activities. Has some substrate specificity for branched chain acyl-CoA, determining the biosynthesis of branched-chain of fatty acids instead of straight-chain. This is Beta-ketoacyl-[acyl-carrier-protein] synthase III 2 from Bacillus subtilis (strain 168).